Reading from the N-terminus, the 438-residue chain is 3-phosphoshikimate 1-carboxyvinyltransferase (438 aa).

The 3-phosphoshikimate site is built by K21, S22, and R26. K21 lines the phosphoenolpyruvate pocket. Phosphoenolpyruvate contacts are provided by G95 and R123. 3-phosphoshikimate contacts are provided by S167, Q169, D315, and K342. Q169 lines the phosphoenolpyruvate pocket. Residue D315 is the Proton acceptor of the active site. Residues R346 and R387 each contribute to the phosphoenolpyruvate site.

The protein belongs to the EPSP synthase family. Monomer.

The protein localises to the cytoplasm. It catalyses the reaction 3-phosphoshikimate + phosphoenolpyruvate = 5-O-(1-carboxyvinyl)-3-phosphoshikimate + phosphate. Its pathway is metabolic intermediate biosynthesis; chorismate biosynthesis; chorismate from D-erythrose 4-phosphate and phosphoenolpyruvate: step 6/7. Its function is as follows. Catalyzes the transfer of the enolpyruvyl moiety of phosphoenolpyruvate (PEP) to the 5-hydroxyl of shikimate-3-phosphate (S3P) to produce enolpyruvyl shikimate-3-phosphate and inorganic phosphate. This is 3-phosphoshikimate 1-carboxyvinyltransferase from Coxiella burnetii (strain RSA 331 / Henzerling II).